The sequence spans 326 residues: GTP 3',8-cyclase (326 aa).

In terms of domain architecture, Radical SAM core spans serine 6–glutamate 220. Arginine 15 contributes to the GTP binding site. Cysteine 22 and cysteine 26 together coordinate [4Fe-4S] cluster. An S-adenosyl-L-methionine-binding site is contributed by tyrosine 28. A [4Fe-4S] cluster-binding site is contributed by cysteine 29. Arginine 65 serves as a coordination point for GTP. Glycine 69 contributes to the S-adenosyl-L-methionine binding site. Threonine 96 is a GTP binding site. Serine 120 serves as a coordination point for S-adenosyl-L-methionine. GTP is bound at residue lysine 157. Methionine 191 is a binding site for S-adenosyl-L-methionine. Residues cysteine 254 and cysteine 257 each contribute to the [4Fe-4S] cluster site. Arginine 259 to arginine 261 is a binding site for GTP. Residue cysteine 271 participates in [4Fe-4S] cluster binding.

The protein belongs to the radical SAM superfamily. MoaA family. As to quaternary structure, monomer and homodimer. Requires [4Fe-4S] cluster as cofactor.

The enzyme catalyses GTP + AH2 + S-adenosyl-L-methionine = (8S)-3',8-cyclo-7,8-dihydroguanosine 5'-triphosphate + 5'-deoxyadenosine + L-methionine + A + H(+). It participates in cofactor biosynthesis; molybdopterin biosynthesis. Functionally, catalyzes the cyclization of GTP to (8S)-3',8-cyclo-7,8-dihydroguanosine 5'-triphosphate. This chain is GTP 3',8-cyclase, found in Geobacter sulfurreducens (strain ATCC 51573 / DSM 12127 / PCA).